A 342-amino-acid polypeptide reads, in one-letter code: Ribosomal RNA small subunit methyltransferase H (342 aa).

S-adenosyl-L-methionine is bound by residues 36–38, Asp56, Phe82, Asp100, and Gln107; that span reads GGH. The tract at residues 309-342 is disordered; that stretch reads ENRESGMGKGHGAAASRFPTPDSRFPTSPNGDAP. Residues 333–342 are compositionally biased toward polar residues; that stretch reads FPTSPNGDAP.

The protein belongs to the methyltransferase superfamily. RsmH family.

The protein resides in the cytoplasm. The catalysed reaction is cytidine(1402) in 16S rRNA + S-adenosyl-L-methionine = N(4)-methylcytidine(1402) in 16S rRNA + S-adenosyl-L-homocysteine + H(+). Its function is as follows. Specifically methylates the N4 position of cytidine in position 1402 (C1402) of 16S rRNA. This is Ribosomal RNA small subunit methyltransferase H from Xanthomonas campestris pv. campestris (strain 8004).